Consider the following 1529-residue polypeptide: MIIEERKSHELNLESIDNDLRLESVRQNAEKLGWDHFARSVRRNLQEKHHTLEASIRLDVLGSLAFMKAHLPIDKDESLNRKIQSLADGLGENCVVAAHIGGISIKSHDVSVDIGIAEEAIVSCKIGYFGQPLFDAPEALALLKSDEFSKLRDSIAEVLSLIPKEISLSDKNACKDALRALEHVLIRDAADSSFSAINNNKYGFYSPRNELRPGRLYYIAEPMLIRVAEKEGKMHADNSHLDSLPYIEIFFVKSNKKSKLPVFNQSGEWTTFNDAKVCICIRFKHAFLFSQHTIRKLAKTVPKSPVVRSYVNFYRYATGRPTVKKNLELLTQFPNETDIQQHYNVDSSKLASDSDSLVVEMFLGDLRELPKLIETLRSEWMHASLWESIVAMCEPNQDAVKKEVRAANLELLLRRNEFNLKFDTEFGNMSMQISEKEPRRYFIRTVSQLTGDTPSSDLDNLLTEKLNSTWSIPISLTFALSTLNCRLNSLLSPLNYVKPSNPFDSDKRQQWWLGANKTHTNITVEKVKKRIVLEIGPVIEPKELVYTRQEDEELCGSLLSSFGEVDQYYVQTSTIGKTGPQPRPKREPSQLASMGMMSAELDMARNRQSMEHAMHPRPQDLRELSNLESARIQMRQSIGAAHAVGLASHQSFTSPGPMRHHPYMGGSYDSPGFYGPNIPASVPFPDAAAFGKGKQRKPRAKKQPGEEVAAPSGRGKGRKGRGAAAVGAGSGRKSSGVVGENQYGMDQMRPQLQRSYSDFQNPMNPQHMPQYAQHMQHMQQMHQMQNMQQYQQMQQYQQNQQYQQNQQYRMHMQQQQLQQQQMQSPQQQSGMNTPKSQRLTDEDSDEDVDPPRLPKPQVSAAVSRPSLPPPHQLGNPMVGYPGMPLQSPNHLPLTPSPLSAPPKPFSPEQHHFGTKMRDNAYWKEAERNIDVKPDIEKLKQQMAASSSCGPVLGTAATSSSSDPSTSGESSNATESASSAPLMKPPTTAQTPKKKLGLEATLSKLRGVQEQALQKQEQQRIQQQDSVDSTNSEQPTPQPQFSQQPGPPLAPNQVNRVMNMSNAFDDEAGSSTNTSDIKPSLASLQKSTGSIVVDPTTPGTSSNIAQPSGVMPSLKKEVEEQPPEREKEKLIVKIPKILKVDDRRDERREKERDRDRDRDRDGDRERDRYEKEDKSQREKDKKERDKERKRRDRDRTEAKKEKDSSGTREKESKKRKREKSEEKDKREPDRKKEKKEGKELSKTTTKSVLPMIPTRTLKNFRIPKKDTVDEDKKEPKDESIPGPSTSSESSTRKEVAPAPISRKESTTSSVAPLQRKESFTSQSGAFPPSEYHREPPKKKPPPISGPAQGSYSGSSNAGPISSSSRGSGNGGSRKPPVLPPPALPMRGPPSDQMYRERTGSMRGFPPSSHYHGSGGSGGSKQVASYAQGLPPGMGPPAAKPHGNSYQASQWVRPPTHRDSHSYHGMPTLGPPQISQREQPPPPPQMIPLPKENPPPPLAPPSRPHRDSRARGGGDNGPDSPEEGTLRIDDE.

Disordered stretches follow at residues 685 to 740, 807 to 919, and 933 to 1529; these read PDAA…VVGE, QYRM…MRDN, and PDIE…IDDE. The segment covering 693–702 has biased composition (basic residues); sequence GKQRKPRAKK. 2 stretches are compositionally biased toward low complexity: residues 722–739 and 807–828; these read GAAAVGAGSGRKSSGVVG and QYRMHMQQQQLQQQQMQSPQQQ. Pro residues predominate over residues 894–905; sequence TPSPLSAPPKPF. The segment covering 908–919 has biased composition (basic and acidic residues); sequence EQHHFGTKMRDN. 2 stretches are compositionally biased toward low complexity: residues 958–990 and 1008–1023; these read SSSSDPSTSGESSNATESASSAPLMKPPTTAQT and QEQALQKQEQQRIQQQ. Residues 1008-1032 adopt a coiled-coil conformation; that stretch reads QEQALQKQEQQRIQQQDSVDSTNSE. 3 stretches are compositionally biased toward polar residues: residues 1051–1061, 1068–1089, and 1096–1105; these read NQVNRVMNMSN, GSSTNTSDIKPSLASLQKSTGS, and TPGTSSNIAQ. 4 stretches are compositionally biased toward basic and acidic residues: residues 1113–1130, 1137–1185, 1192–1240, and 1262–1278; these read LKKEVEEQPPEREKEKLI, LKVD…ERDK, RDRT…KELS, and PKKDTVDEDKKEPKDES. Residues 1169 to 1202 are a coiled coil; sequence EKEDKSQREKDKKERDKERKRRDRDRTEAKKEKD. Over residues 1279 to 1288 the composition is skewed to low complexity; it reads IPGPSTSSES. Over residues 1289 to 1304 the composition is skewed to basic and acidic residues; that stretch reads STRKEVAPAPISRKES. The span at 1349–1365 shows a compositional bias: low complexity; sequence SYSGSSNAGPISSSSRG. Pro residues-rich tracts occupy residues 1375-1386 and 1477-1500; these read PVLPPPALPMRG and QPPPPPQMIPLPKENPPPPLAPPS.

This sequence belongs to the Mediator complex subunit 1 family. Component of the Mediator complex.

The protein localises to the nucleus. Component of the Mediator complex, a coactivator involved in the regulated transcription of nearly all RNA polymerase II-dependent genes. Mediator functions as a bridge to convey information from gene-specific regulatory proteins to the basal RNA polymerase II transcription machinery. Mediator is recruited to promoters by direct interactions with regulatory proteins and serves as a scaffold for the assembly of a functional preinitiation complex with RNA polymerase II and the general transcription factors. The polypeptide is Mediator of RNA polymerase II transcription subunit 1.1 (sop-3) (Caenorhabditis briggsae).